The sequence spans 276 residues: Urease accessory protein UreD (276 aa).

Belongs to the UreD family. UreD, UreF and UreG form a complex that acts as a GTP-hydrolysis-dependent molecular chaperone, activating the urease apoprotein by helping to assemble the nickel containing metallocenter of UreC. The UreE protein probably delivers the nickel.

It localises to the cytoplasm. Required for maturation of urease via the functional incorporation of the urease nickel metallocenter. This chain is Urease accessory protein UreD, found in Albidiferax ferrireducens (strain ATCC BAA-621 / DSM 15236 / T118) (Rhodoferax ferrireducens).